Consider the following 179-residue polypeptide: MSRIGKIPVTVPAGVDVTISGQDVTVKGPKGTLALTISEPIAIEKAEDGSLSVTRPDDERRSRALHGLSRTLVANIITGVTEGYTKKMEIHGVGYRVALKGKDLEFALGFSHPVPIEAPEGITFVVESPTRFSVSGIDKQKVGQISANIRRLRRPDPYKGKGVRYEGEQIRRKVGKTGK.

It belongs to the universal ribosomal protein uL6 family. In terms of assembly, part of the 50S ribosomal subunit.

Functionally, this protein binds to the 23S rRNA, and is important in its secondary structure. It is located near the subunit interface in the base of the L7/L12 stalk, and near the tRNA binding site of the peptidyltransferase center. The polypeptide is Large ribosomal subunit protein uL6 (Rhodococcus erythropolis (strain PR4 / NBRC 100887)).